Here is a 1050-residue protein sequence, read N- to C-terminus: Diacylglycerol kinase iota (1050 aa).

2 disordered regions span residues 52–73 (NPSSSAGEERGATGGSSSSGSG) and 325–356 (PQNSLKASNRKKKRTSFKRKASKRGTEQENKG). Residues 332–347 (SNRKKKRTSFKRKASK) show a composition bias toward basic residues. One can recognise a DAGKc domain in the interval 367–502 (PLMKPLLVFV…DRWNLHVERN (136 aa)). ANK repeat units follow at residues 943 to 972 (GHCSLLHYAAKTGNGEIVKYILDHGPAELL) and 979 to 1008 (TGETALHKAACQRNRAVCQLLVDAGASLRQ). A PDZ-binding motif is present at residues 1048–1050 (TAV).

It belongs to the eukaryotic diacylglycerol kinase family. Interacts (via PDZ-binding motif) with DLG4; controls the localization of DGKI to the synapse. Interacts (via PDZ-binding motif) with DLG1. Interacts (via PDZ-binding motif) with DLG2. Interacts (via PDZ-binding motif) with DLG3. May interact with RASGRP3; involved in the regulation of RASGRP3 activity. In terms of tissue distribution, specifically expressed in brain (at protein level). Expressed in hippocampus, cerebellum, brain stem and spinal cord (at protein level). Highly expressed in hippocampus, cerebellar cortex, olfactory bulb, and olfactory tubercle and to lower extent in the cerebral cortex, caudate putamen, and thalamus. Not detected in the white matter. Also expressed in eye. As to expression, major isoform in brain (at protein level). Minor isoform in brain (at protein level). In terms of tissue distribution, expressed in brain (at protein level).

It is found in the cell projection. Its subcellular location is the axon. It localises to the dendrite. The protein localises to the presynapse. The protein resides in the postsynapse. It is found in the postsynaptic density. Its subcellular location is the synaptic cell membrane. It localises to the cytoplasmic vesicle. The protein localises to the secretory vesicle. The protein resides in the synaptic vesicle membrane. It is found in the cytoplasm. Its subcellular location is the cytosol. It localises to the nucleus. It carries out the reaction a 1,2-diacyl-sn-glycerol + ATP = a 1,2-diacyl-sn-glycero-3-phosphate + ADP + H(+). The catalysed reaction is 1,2-di-(9Z-octadecenoyl)-sn-glycerol + ATP = 1,2-di-(9Z-octadecenoyl)-sn-glycero-3-phosphate + ADP + H(+). It catalyses the reaction 1-octadecanoyl-2-(9Z,12Z)-octadecadienoyl-sn-glycerol + ATP = 1-octadecanoyl-2-(9Z,12Z-octadecadienoyl)-sn-glycero-3-phosphate + ADP + H(+). The enzyme catalyses 1-octadecanoyl-2-(5Z,8Z,11Z,14Z-eicosatetraenoyl)-sn-glycerol + ATP = 1-octadecanoyl-2-(5Z,8Z,11Z,14Z-eicosatetraenoyl)-sn-glycero-3-phosphate + ADP + H(+). It participates in lipid metabolism; glycerolipid metabolism. With respect to regulation, activated by phosphatidylserine. Diacylglycerol kinase that converts diacylglycerol/DAG into phosphatidic acid/phosphatidate/PA and regulates the respective levels of these two bioactive lipids. Thereby, acts as a central switch between the signaling pathways activated by these second messengers with different cellular targets and opposite effects in numerous biological processes. Has probably no preference for any of the diacylglycerols in terms of the acyl chain composition, especially for the acyl chain at the sn-2 position. By controlling the diacylglycerol/DAG-mediated activation of RASGRP3, negatively regulates the Rap1 signaling pathway. May play a role in presynaptic diacylglycerol/DAG signaling and control neurotransmitter release during metabotropic glutamate receptor-dependent long-term depression. In terms of biological role, has a decreased affinity for ATP and a reduced diacylglycerol kinase activity. Has no preference for any of the diacylglycerols in terms of the acyl chain composition. Functionally, has no diacylglycerol kinase activity. The polypeptide is Diacylglycerol kinase iota (Rattus norvegicus (Rat)).